A 610-amino-acid polypeptide reads, in one-letter code: Glutamine--fructose-6-phosphate aminotransferase [isomerizing] (610 aa).

Cysteine 2 acts as the Nucleophile; for GATase activity in catalysis. The region spanning 2-219 (CGIVGATSER…EGDVADINRT (218 aa)) is the Glutamine amidotransferase type-2 domain. 2 consecutive SIS domains span residues 287–427 (AADI…YRGM) and 459–600 (LAQD…VDQP). The active-site For Fru-6P isomerization activity is lysine 605.

As to quaternary structure, homodimer.

It localises to the cytoplasm. It carries out the reaction D-fructose 6-phosphate + L-glutamine = D-glucosamine 6-phosphate + L-glutamate. Catalyzes the first step in hexosamine metabolism, converting fructose-6P into glucosamine-6P using glutamine as a nitrogen source. This is Glutamine--fructose-6-phosphate aminotransferase [isomerizing] from Idiomarina loihiensis (strain ATCC BAA-735 / DSM 15497 / L2-TR).